A 273-amino-acid chain; its full sequence is Large ribosomal subunit protein uL2c (273 aa).

Disordered stretches follow at residues 30–55 and 222–243; these read EKKL…RHRG and GSAM…PIGR. The span at 45 to 55 shows a compositional bias: basic residues; it reads NKGRITTRHRG.

Belongs to the universal ribosomal protein uL2 family. Part of the 50S ribosomal subunit.

Its subcellular location is the plastid. The protein is Large ribosomal subunit protein uL2c (rpl2) of Prototheca wickerhamii.